We begin with the raw amino-acid sequence, 169 residues long: Transcription antitermination protein NusB (169 aa).

Residues 1-23 (MADSKKPAIKKPVPKGDRKANRR) form a disordered region.

It belongs to the NusB family.

Involved in transcription antitermination. Required for transcription of ribosomal RNA (rRNA) genes. Binds specifically to the boxA antiterminator sequence of the ribosomal RNA (rrn) operons. The protein is Transcription antitermination protein NusB of Rhodopseudomonas palustris (strain HaA2).